Reading from the N-terminus, the 198-residue chain is Nucleoid occlusion factor SlmA (198 aa).

The 61-residue stretch at 10–70 folds into the HTH tetR-type domain; it reads NRREEILQSL…SLIEFIEDSL (61 aa). Positions 33 to 52 form a DNA-binding region, H-T-H motif; sequence TTAKLAASVGVSEAALYRHF. Residues 117-144 are a coiled coil; sequence EQDRLQGRINQLFERIEAQLRQVLREKR.

It belongs to the nucleoid occlusion factor SlmA family. Homodimer. Interacts with FtsZ.

It localises to the cytoplasm. It is found in the nucleoid. Its function is as follows. Required for nucleoid occlusion (NO) phenomenon, which prevents Z-ring formation and cell division over the nucleoid. Acts as a DNA-associated cell division inhibitor that binds simultaneously chromosomal DNA and FtsZ, and disrupts the assembly of FtsZ polymers. SlmA-DNA-binding sequences (SBS) are dispersed on non-Ter regions of the chromosome, preventing FtsZ polymerization at these regions. The chain is Nucleoid occlusion factor SlmA from Salmonella dublin (strain CT_02021853).